The following is a 135-amino-acid chain: Ribonuclease P protein component (135 aa).

This sequence belongs to the RnpA family. Consists of a catalytic RNA component (M1 or rnpB) and a protein subunit.

It catalyses the reaction Endonucleolytic cleavage of RNA, removing 5'-extranucleotides from tRNA precursor.. In terms of biological role, RNaseP catalyzes the removal of the 5'-leader sequence from pre-tRNA to produce the mature 5'-terminus. It can also cleave other RNA substrates such as 4.5S RNA. The protein component plays an auxiliary but essential role in vivo by binding to the 5'-leader sequence and broadening the substrate specificity of the ribozyme. The chain is Ribonuclease P protein component from Pseudomonas paraeruginosa (strain DSM 24068 / PA7) (Pseudomonas aeruginosa (strain PA7)).